A 103-amino-acid chain; its full sequence is Nucleoid-associated protein SUN_2278 (103 aa).

Belongs to the YbaB/EbfC family. As to quaternary structure, homodimer.

Its subcellular location is the cytoplasm. It is found in the nucleoid. Binds to DNA and alters its conformation. May be involved in regulation of gene expression, nucleoid organization and DNA protection. This chain is Nucleoid-associated protein SUN_2278, found in Sulfurovum sp. (strain NBC37-1).